We begin with the raw amino-acid sequence, 160 residues long: Protein FrzA (160 aa).

The region spanning 14 to 155 (EQEFFCFRVG…FSKLLQTARQ (142 aa)) is the CheW-like domain.

Its function is as follows. Necessary for proper aggregation of cells to form fruiting bodies. FRZ genes define a system of signal transduction analogous to the enterobacterial chemotaxis systems. The polypeptide is Protein FrzA (frzA) (Myxococcus xanthus).